Here is a 414-residue protein sequence, read N- to C-terminus: L-cysteine:1D-myo-inositol 2-amino-2-deoxy-alpha-D-glucopyranoside ligase (414 aa).

Cys44 lines the Zn(2+) pocket. Residues 44-47, Thr59, and 82-84 contribute to the L-cysteinyl-5'-AMP site; these read CGIT and NIT. The short motif at 46–56 is the 'HIGH' region element; it reads ITPYDSTHLGH. A 'ERGGDP' region motif is present at residues 188-193; the sequence is ERGGDP. Trp228 contributes to the L-cysteinyl-5'-AMP binding site. Cys232 provides a ligand contact to Zn(2+). An L-cysteinyl-5'-AMP-binding site is contributed by 250-252; the sequence is GSD. A Zn(2+)-binding site is contributed by His257. Ile284 is an L-cysteinyl-5'-AMP binding site. Positions 290–294 match the 'KMSKS' region motif; it reads KMSKS.

This sequence belongs to the class-I aminoacyl-tRNA synthetase family. MshC subfamily. As to quaternary structure, monomer. The cofactor is Zn(2+).

The enzyme catalyses 1D-myo-inositol 2-amino-2-deoxy-alpha-D-glucopyranoside + L-cysteine + ATP = 1D-myo-inositol 2-(L-cysteinylamino)-2-deoxy-alpha-D-glucopyranoside + AMP + diphosphate + H(+). In terms of biological role, catalyzes the ATP-dependent condensation of GlcN-Ins and L-cysteine to form L-Cys-GlcN-Ins. In Corynebacterium aurimucosum (strain ATCC 700975 / DSM 44827 / CIP 107346 / CN-1) (Corynebacterium nigricans), this protein is L-cysteine:1D-myo-inositol 2-amino-2-deoxy-alpha-D-glucopyranoside ligase.